The sequence spans 547 residues: Glucose-6-phosphate isomerase 2 (547 aa).

The active-site Proton donor is E351. Active-site residues include H382 and K508.

Belongs to the GPI family.

The protein resides in the cytoplasm. The enzyme catalyses alpha-D-glucose 6-phosphate = beta-D-fructose 6-phosphate. Its pathway is carbohydrate biosynthesis; gluconeogenesis. It functions in the pathway carbohydrate degradation; glycolysis; D-glyceraldehyde 3-phosphate and glycerone phosphate from D-glucose: step 2/4. Its function is as follows. Catalyzes the reversible isomerization of glucose-6-phosphate to fructose-6-phosphate. In Neisseria meningitidis serogroup B (strain ATCC BAA-335 / MC58), this protein is Glucose-6-phosphate isomerase 2.